A 350-amino-acid chain; its full sequence is tRNA uridine(34) hydroxylase (350 aa).

Residues 146–240 (DDPDALFIDM…YARKAREQGL (95 aa)) enclose the Rhodanese domain. Cys-200 acts as the Cysteine persulfide intermediate in catalysis.

It belongs to the TrhO family.

The enzyme catalyses uridine(34) in tRNA + AH2 + O2 = 5-hydroxyuridine(34) in tRNA + A + H2O. Catalyzes oxygen-dependent 5-hydroxyuridine (ho5U) modification at position 34 in tRNAs, the first step in 5-carboxymethoxyuridine (cmo5U) biosynthesis. May be part of an alternate pathway, which is able to bypass cmo5U biogenesis in a subset of tRNAs under aerobic conditions. This chain is tRNA uridine(34) hydroxylase, found in Escherichia coli O81 (strain ED1a).